We begin with the raw amino-acid sequence, 203 residues long: Thymidylate kinase (203 aa).

10-17 (GIDGSGKS) is an ATP binding site.

This sequence belongs to the thymidylate kinase family.

It catalyses the reaction dTMP + ATP = dTDP + ADP. Functionally, phosphorylation of dTMP to form dTDP in both de novo and salvage pathways of dTTP synthesis. The sequence is that of Thymidylate kinase from Brachyspira hyodysenteriae (strain ATCC 49526 / WA1).